A 430-amino-acid chain; its full sequence is Tol-Pal system protein TolB (430 aa).

A signal peptide spans 1–21; that stretch reads MKQALRVAFGFLILWASVLHA.

The protein belongs to the TolB family. As to quaternary structure, the Tol-Pal system is composed of five core proteins: the inner membrane proteins TolA, TolQ and TolR, the periplasmic protein TolB and the outer membrane protein Pal. They form a network linking the inner and outer membranes and the peptidoglycan layer.

Its subcellular location is the periplasm. In terms of biological role, part of the Tol-Pal system, which plays a role in outer membrane invagination during cell division and is important for maintaining outer membrane integrity. TolB occupies a key intermediary position in the Tol-Pal system because it communicates directly with both membrane-embedded components, Pal in the outer membrane and TolA in the inner membrane. This Shigella boydii serotype 18 (strain CDC 3083-94 / BS512) protein is Tol-Pal system protein TolB.